Here is a 159-residue protein sequence, read N- to C-terminus: Transcription antitermination protein NusB (159 aa).

Belongs to the NusB family.

Involved in transcription antitermination. Required for transcription of ribosomal RNA (rRNA) genes. Binds specifically to the boxA antiterminator sequence of the ribosomal RNA (rrn) operons. This chain is Transcription antitermination protein NusB, found in Stenotrophomonas maltophilia (strain K279a).